We begin with the raw amino-acid sequence, 223 residues long: Urease subunit alpha (223 aa).

The tract at residues 1-101 is urease gamma; sequence MHFTQQQLQR…LVTIHEPIAN (101 aa). Residues 102–223 form a urease beta region; that stretch reads DDKIKAGEIF…LSKAKEKGFL (122 aa).

It in the N-terminal section; belongs to the urease gamma subunit family. The protein in the C-terminal section; belongs to the urease beta subunit family. Heterohexamer of 3 UreA (alpha) and 3 UreB (beta) subunits.

The protein resides in the cytoplasm. The enzyme catalyses urea + 2 H2O + H(+) = hydrogencarbonate + 2 NH4(+). It participates in nitrogen metabolism; urea degradation; CO(2) and NH(3) from urea (urease route): step 1/1. This is Urease subunit alpha from Campylobacter lari.